The sequence spans 504 residues: Histidine ammonia-lyase (504 aa).

The segment at residues 142 to 144 (ASG) is a cross-link (5-imidazolinone (Ala-Gly)). At Ser143 the chain carries 2,3-didehydroalanine (Ser).

This sequence belongs to the PAL/histidase family. In terms of processing, contains an active site 4-methylidene-imidazol-5-one (MIO), which is formed autocatalytically by cyclization and dehydration of residues Ala-Ser-Gly.

The protein localises to the cytoplasm. The enzyme catalyses L-histidine = trans-urocanate + NH4(+). Its pathway is amino-acid degradation; L-histidine degradation into L-glutamate; N-formimidoyl-L-glutamate from L-histidine: step 1/3. The polypeptide is Histidine ammonia-lyase (Staphylococcus aureus (strain MRSA252)).